A 675-amino-acid chain; its full sequence is Nexilin (675 aa).

The tract at residues M1–E66 is disordered. Phosphoserine is present on K16. Over residues G27–E66 the composition is skewed to basic and acidic residues. The residue at position 80 (S80) is a Phosphoserine. Positions R105 to R127 are disordered. S241 carries the phosphoserine modification. Disordered stretches follow at residues L254–K278 and S313–R336. Residues S357 and S365 each carry the phosphoserine modification. At T370 the chain carries Phosphothreonine. Disordered stretches follow at residues E487 to M513 and L551 to F584. 2 positions are modified to phosphoserine: S564 and S569. The 89-residue stretch at P582–T670 folds into the Ig-like domain.

Interacts with F-actin. As to expression, abundantly expressed in heart and skeletal muscle, and at lower levels in placenta, lung, liver and pancreas. Also expressed in HeLaS3 and MOLT-4 cell lines.

The protein resides in the cytoplasm. Its subcellular location is the cytoskeleton. It localises to the cell junction. The protein localises to the adherens junction. It is found in the myofibril. The protein resides in the sarcomere. Its subcellular location is the z line. Functionally, involved in regulating cell migration through association with the actin cytoskeleton. Has an essential role in the maintenance of Z line and sarcomere integrity. The protein is Nexilin of Homo sapiens (Human).